Here is a 378-residue protein sequence, read N- to C-terminus: Succinyl-diaminopimelate desuccinylase (378 aa).

H77 provides a ligand contact to Zn(2+). D79 is an active-site residue. D108 is a Zn(2+) binding site. The active-site Proton acceptor is the E138. Zn(2+) is bound by residues E139, E167, and H350.

It belongs to the peptidase M20A family. DapE subfamily. In terms of assembly, homodimer. Zn(2+) is required as a cofactor. Requires Co(2+) as cofactor.

It carries out the reaction N-succinyl-(2S,6S)-2,6-diaminopimelate + H2O = (2S,6S)-2,6-diaminopimelate + succinate. The protein operates within amino-acid biosynthesis; L-lysine biosynthesis via DAP pathway; LL-2,6-diaminopimelate from (S)-tetrahydrodipicolinate (succinylase route): step 3/3. Catalyzes the hydrolysis of N-succinyl-L,L-diaminopimelic acid (SDAP), forming succinate and LL-2,6-diaminopimelate (DAP), an intermediate involved in the bacterial biosynthesis of lysine and meso-diaminopimelic acid, an essential component of bacterial cell walls. This chain is Succinyl-diaminopimelate desuccinylase, found in Erythrobacter litoralis (strain HTCC2594).